The primary structure comprises 503 residues: Probable DNA ligase (503 aa).

Glu210 lines the ATP pocket. Lys212 acts as the N6-AMP-lysine intermediate in catalysis. ATP contacts are provided by Arg217, Arg232, Glu261, Phe296, Arg367, and Lys373.

Belongs to the ATP-dependent DNA ligase family. Mg(2+) serves as cofactor.

The catalysed reaction is ATP + (deoxyribonucleotide)n-3'-hydroxyl + 5'-phospho-(deoxyribonucleotide)m = (deoxyribonucleotide)n+m + AMP + diphosphate.. Functionally, DNA ligase that seals nicks in double-stranded DNA during DNA replication, DNA recombination and DNA repair. The protein is Probable DNA ligase of Rhodococcus jostii (strain RHA1).